A 143-amino-acid polypeptide reads, in one-letter code: MIRKSKKITKLRGSRTCGYGAAKKHRGAGHKGGKGLAGVTKHRWIHTVKYMPDHIGKYGFKRHSSLIKELKVINLGQLDEIVSKNKESFEIVDGKIVIDITTLDYEKVLGKGKITCPMIIKAVEFSESAKEKIESAGGEFVEL.

This sequence belongs to the universal ribosomal protein uL15 family. As to quaternary structure, part of the 50S ribosomal subunit.

Its function is as follows. Binds to the 23S rRNA. The protein is Large ribosomal subunit protein uL15 of Methanococcus aeolicus (strain ATCC BAA-1280 / DSM 17508 / OCM 812 / Nankai-3).